The chain runs to 95 residues: Aspartyl/glutamyl-tRNA(Asn/Gln) amidotransferase subunit C (95 aa).

It belongs to the GatC family. Heterotrimer of A, B and C subunits.

It catalyses the reaction L-glutamyl-tRNA(Gln) + L-glutamine + ATP + H2O = L-glutaminyl-tRNA(Gln) + L-glutamate + ADP + phosphate + H(+). The catalysed reaction is L-aspartyl-tRNA(Asn) + L-glutamine + ATP + H2O = L-asparaginyl-tRNA(Asn) + L-glutamate + ADP + phosphate + 2 H(+). Functionally, allows the formation of correctly charged Asn-tRNA(Asn) or Gln-tRNA(Gln) through the transamidation of misacylated Asp-tRNA(Asn) or Glu-tRNA(Gln) in organisms which lack either or both of asparaginyl-tRNA or glutaminyl-tRNA synthetases. The reaction takes place in the presence of glutamine and ATP through an activated phospho-Asp-tRNA(Asn) or phospho-Glu-tRNA(Gln). The protein is Aspartyl/glutamyl-tRNA(Asn/Gln) amidotransferase subunit C of Campylobacter concisus (strain 13826).